The following is a 355-amino-acid chain: Ferrochelatase (355 aa).

Residues His-214 and Glu-295 each contribute to the Fe cation site.

It belongs to the ferrochelatase family.

The protein resides in the cytoplasm. The catalysed reaction is heme b + 2 H(+) = protoporphyrin IX + Fe(2+). The protein operates within porphyrin-containing compound metabolism; protoheme biosynthesis; protoheme from protoporphyrin-IX: step 1/1. Functionally, catalyzes the ferrous insertion into protoporphyrin IX. The chain is Ferrochelatase from Burkholderia thailandensis (strain ATCC 700388 / DSM 13276 / CCUG 48851 / CIP 106301 / E264).